The chain runs to 144 residues: Nucleoside diphosphate kinase (144 aa).

The ATP site is built by lysine 11, phenylalanine 59, arginine 87, threonine 93, arginine 104, and asparagine 114. Histidine 117 serves as the catalytic Pros-phosphohistidine intermediate.

The protein belongs to the NDK family. In terms of assembly, homotetramer. The cofactor is Mg(2+).

Its subcellular location is the cytoplasm. It catalyses the reaction a 2'-deoxyribonucleoside 5'-diphosphate + ATP = a 2'-deoxyribonucleoside 5'-triphosphate + ADP. It carries out the reaction a ribonucleoside 5'-diphosphate + ATP = a ribonucleoside 5'-triphosphate + ADP. Major role in the synthesis of nucleoside triphosphates other than ATP. The ATP gamma phosphate is transferred to the NDP beta phosphate via a ping-pong mechanism, using a phosphorylated active-site intermediate. The protein is Nucleoside diphosphate kinase of Coxiella burnetii (strain CbuG_Q212) (Coxiella burnetii (strain Q212)).